The chain runs to 375 residues: Chaperone protein DnaJ (375 aa).

A J domain is found at 4–68; the sequence is DYYEILGVSR…ETRARYDRFG (65 aa). The CR-type zinc finger occupies 135–217; it reads GGEKEIRISH…CDGKGANQVT (83 aa). 8 residues coordinate Zn(2+): C148, C151, C165, C168, C191, C194, C205, and C208. 4 CXXCXGXG motif repeats span residues 148-155, 165-172, 191-198, and 205-212; these read CEVCSGSG, CSTCSGSG, CPTCNGTG, and CDACDGKG.

The protein belongs to the DnaJ family. In terms of assembly, homodimer. The cofactor is Zn(2+).

Its subcellular location is the cytoplasm. Participates actively in the response to hyperosmotic and heat shock by preventing the aggregation of stress-denatured proteins and by disaggregating proteins, also in an autonomous, DnaK-independent fashion. Unfolded proteins bind initially to DnaJ; upon interaction with the DnaJ-bound protein, DnaK hydrolyzes its bound ATP, resulting in the formation of a stable complex. GrpE releases ADP from DnaK; ATP binding to DnaK triggers the release of the substrate protein, thus completing the reaction cycle. Several rounds of ATP-dependent interactions between DnaJ, DnaK and GrpE are required for fully efficient folding. Also involved, together with DnaK and GrpE, in the DNA replication of plasmids through activation of initiation proteins. This Nostoc punctiforme (strain ATCC 29133 / PCC 73102) protein is Chaperone protein DnaJ.